A 402-amino-acid polypeptide reads, in one-letter code: S-adenosylmethionine synthase (402 aa).

Residue histidine 16 participates in ATP binding. Aspartate 18 serves as a coordination point for Mg(2+). Glutamate 44 provides a ligand contact to K(+). 2 residues coordinate L-methionine: glutamate 57 and glutamine 103. The interval 103-113 is flexible loop; sequence QSPDIAQGVDT. ATP contacts are provided by residues 178–180, 249–250, aspartate 258, 264–265, alanine 281, and lysine 285; these read DGK, KF, and RK. Aspartate 258 contributes to the L-methionine binding site. Residue lysine 289 participates in L-methionine binding.

It belongs to the AdoMet synthase family. Homotetramer; dimer of dimers. The cofactor is Mg(2+). Requires K(+) as cofactor.

Its subcellular location is the cytoplasm. It carries out the reaction L-methionine + ATP + H2O = S-adenosyl-L-methionine + phosphate + diphosphate. The protein operates within amino-acid biosynthesis; S-adenosyl-L-methionine biosynthesis; S-adenosyl-L-methionine from L-methionine: step 1/1. Its function is as follows. Catalyzes the formation of S-adenosylmethionine (AdoMet) from methionine and ATP. The overall synthetic reaction is composed of two sequential steps, AdoMet formation and the subsequent tripolyphosphate hydrolysis which occurs prior to release of AdoMet from the enzyme. The protein is S-adenosylmethionine synthase of Mycolicibacterium vanbaalenii (strain DSM 7251 / JCM 13017 / BCRC 16820 / KCTC 9966 / NRRL B-24157 / PYR-1) (Mycobacterium vanbaalenii).